A 114-amino-acid polypeptide reads, in one-letter code: Putative protein TfaS (114 aa).

This sequence belongs to the tfa family.

The polypeptide is Putative protein TfaS (tfaS) (Escherichia coli (strain K12)).